The following is a 257-amino-acid chain: Deoxyribose-phosphate aldolase (257 aa).

Catalysis depends on aspartate 102, which acts as the Proton donor/acceptor. Lysine 166 acts as the Schiff-base intermediate with acetaldehyde in catalysis. The Proton donor/acceptor role is filled by lysine 198.

Belongs to the DeoC/FbaB aldolase family. DeoC type 2 subfamily.

It localises to the cytoplasm. It catalyses the reaction 2-deoxy-D-ribose 5-phosphate = D-glyceraldehyde 3-phosphate + acetaldehyde. The protein operates within carbohydrate degradation; 2-deoxy-D-ribose 1-phosphate degradation; D-glyceraldehyde 3-phosphate and acetaldehyde from 2-deoxy-alpha-D-ribose 1-phosphate: step 2/2. Functionally, catalyzes a reversible aldol reaction between acetaldehyde and D-glyceraldehyde 3-phosphate to generate 2-deoxy-D-ribose 5-phosphate. This chain is Deoxyribose-phosphate aldolase, found in Aeromonas salmonicida (strain A449).